We begin with the raw amino-acid sequence, 227 residues long: Putative methylase YubD (227 aa).

The protein belongs to the N(4)/N(6)-methyltransferase family.

Its function is as follows. A putative beta subtype methylase whose recognition site is unknown. The polypeptide is Putative methylase YubD (yubD) (Escherichia coli (strain K12)).